We begin with the raw amino-acid sequence, 374 residues long: 2-oxoglutarate-Fe(II) type oxidoreductase ppzC (374 aa).

The disordered stretch occupies residues 111-131; that stretch reads KKGPFDSGYRGPGTQRVNPDE. The region spanning 220-330 is the Fe2OG dioxygenase domain; that stretch reads YPDASLEINF…RVSMPFFWGF (111 aa). Residues His-254, Asp-256, and His-311 each contribute to the Fe cation site. Arg-321 is a binding site for 2-oxoglutarate.

It belongs to the iron/ascorbate-dependent oxidoreductase family. Fe(2+) is required as a cofactor.

It catalyses the reaction peramine + 2-oxoglutarate + O2 = 8-hydroxyperamine + succinate + CO2. It functions in the pathway secondary metabolite biosynthesis. Functionally, 2-oxoglutarate-Fe(II) type oxidoreductase; part of the gene cluster that mediates the biosynthesis of pyrrolopyrazines, secondary metabolites showing insecticidal activity. Within the pathway, ppzC uses peramine as substrate for hydroxylation to yield the novel analog 8-hydroxyperamine. The single multifunctional NRPS ppzA is sufficient to produce peramine via condensation of 1-pyrroline-5-carboxylate and arginine, N-methylation of the alpha-amino group of arginine and reduction of the thioester and the cyclization to form an iminium ion resulting in release from the peptide synthetase. Deprotonation of this intermediate and oxidation of the pyrroline ring would give rise to peramine. In Epichloe species that produce only peramine, the peramine synthetase gene is not localized in a gene cluster, in contrast to Metarhizium species that contain additional pyrrolopyrazine biosynthesis genes. The 2-oxoglutarate-Fe(II) type oxidoreductase ppzC hydroxylates peramine to yield the newly identified compound 8-hydroxyperamine whereas ppzD converts L-proline into trans-4-hydroxy-L-proline, a precursor of peramine biosynthesis. This Metarhizium majus (strain ARSEF 297) protein is 2-oxoglutarate-Fe(II) type oxidoreductase ppzC (ppzC).